Here is a 319-residue protein sequence, read N- to C-terminus: Coproporphyrin III ferrochelatase 2 (319 aa).

Fe-coproporphyrin III-binding positions include Tyr-13, Arg-30, 46–47 (RY), Ser-54, and Tyr-125. The Fe(2+) site is built by His-181 and Glu-262.

This sequence belongs to the ferrochelatase family.

The protein resides in the cytoplasm. The catalysed reaction is Fe-coproporphyrin III + 2 H(+) = coproporphyrin III + Fe(2+). It functions in the pathway porphyrin-containing compound metabolism; protoheme biosynthesis. Its function is as follows. Involved in coproporphyrin-dependent heme b biosynthesis. Catalyzes the insertion of ferrous iron into coproporphyrin III to form Fe-coproporphyrin III. The protein is Coproporphyrin III ferrochelatase 2 of Bacillus anthracis.